Here is a 954-residue protein sequence, read N- to C-terminus: Glycine dehydrogenase (decarboxylating) (954 aa).

Lys704 carries the N6-(pyridoxal phosphate)lysine modification.

Belongs to the GcvP family. As to quaternary structure, the glycine cleavage system is composed of four proteins: P, T, L and H. Pyridoxal 5'-phosphate is required as a cofactor.

The enzyme catalyses N(6)-[(R)-lipoyl]-L-lysyl-[glycine-cleavage complex H protein] + glycine + H(+) = N(6)-[(R)-S(8)-aminomethyldihydrolipoyl]-L-lysyl-[glycine-cleavage complex H protein] + CO2. Its function is as follows. The glycine cleavage system catalyzes the degradation of glycine. The P protein binds the alpha-amino group of glycine through its pyridoxal phosphate cofactor; CO(2) is released and the remaining methylamine moiety is then transferred to the lipoamide cofactor of the H protein. The chain is Glycine dehydrogenase (decarboxylating) from Vibrio vulnificus (strain CMCP6).